We begin with the raw amino-acid sequence, 840 residues long: Phosphatidylglycerol lysyltransferase (840 aa).

The Cytoplasmic portion of the chain corresponds to Met-1 to Lys-8. The helical transmembrane segment at Ile-9 to Leu-29 threads the bilayer. At Tyr-30–Ser-52 the chain is on the extracellular side. Residues Leu-53–Ile-73 traverse the membrane as a helical segment. At Leu-74–Arg-89 the chain is on the cytoplasmic side. A helical transmembrane segment spans residues Val-90–Gly-110. The Extracellular segment spans residues Val-111–His-128. Residues Phe-129–Val-149 traverse the membrane as a helical segment. Residues Phe-150–Lys-161 lie on the Cytoplasmic side of the membrane. Residues Ile-162–Tyr-182 form a helical membrane-spanning segment. Topologically, residues Ser-183–Thr-200 are extracellular. The helical transmembrane segment at Leu-201 to Val-221 threads the bilayer. Topologically, residues Asp-222 to Ser-229 are cytoplasmic. A helical transmembrane segment spans residues Phe-230–Phe-250. Topologically, residues Gly-251 to Val-271 are extracellular. The chain crosses the membrane as a helical span at residues Leu-272 to Ile-292. Residues Leu-293–Ser-337 lie on the Cytoplasmic side of the membrane. A helical transmembrane segment spans residues Leu-338 to Tyr-358. Over Asp-359 to Tyr-369 the chain is Extracellular. A helical membrane pass occupies residues Tyr-370 to Ile-390. Residues Tyr-391–Ser-394 lie on the Cytoplasmic side of the membrane. 2 consecutive transmembrane segments (helical) span residues Arg-395–Thr-415 and Tyr-416–Phe-436. The Cytoplasmic segment spans residues Arg-437–Asn-450. A helical membrane pass occupies residues Leu-451–Gly-471. At Thr-472–Lys-489 the chain is on the extracellular side. Residues Tyr-490–Phe-510 form a helical membrane-spanning segment. Residues Asp-511–Lys-840 are Cytoplasmic-facing.

Belongs to the LPG synthase family.

The protein resides in the cell membrane. The enzyme catalyses L-lysyl-tRNA(Lys) + a 1,2-diacyl-sn-glycero-3-phospho-(1'-sn-glycerol) = a 1,2-diacyl-sn-glycero-3-phospho-1'-(3'-O-L-lysyl)-sn-glycerol + tRNA(Lys). Catalyzes the transfer of a lysyl group from L-lysyl-tRNA(Lys) to membrane-bound phosphatidylglycerol (PG), which produces lysylphosphatidylglycerol (LPG), a major component of the bacterial membrane with a positive net charge. LPG synthesis contributes to bacterial virulence as it is involved in the resistance mechanism against cationic antimicrobial peptides (CAMP) produces by the host's immune system (defensins, cathelicidins) and by the competing microorganisms (bacteriocins). In fact, the modification of anionic phosphatidylglycerol with positively charged L-lysine results in repulsion of the peptides. This chain is Phosphatidylglycerol lysyltransferase (mprF), found in Staphylococcus aureus (strain MRSA252).